Here is a 700-residue protein sequence, read N- to C-terminus: Protein UL29/28 (700 aa).

The segment at 1–30 (MSGRRKGCSAATASSSSSSPPSRLPLPGHA) is disordered. Low complexity predominate over residues 9 to 21 (SAATASSSSSSPP).

Belongs to the herpesviridae US22 family. Interacts with UL38 and host HDAC1; these interactions are necessary for the HDAC1 interaction with UL38. Interacts with host MTA2.

It localises to the virion. The protein localises to the host nucleus. The protein resides in the host cytoplasm. Contributes to activation of immediate-early gene expression. This is Protein UL29/28 (UL29) from Human cytomegalovirus (strain Merlin) (HHV-5).